The following is a 64-amino-acid chain: Alpha-conotoxin-like Lt1.3 (64 aa).

A signal peptide spans 1–21 (MGMRMMFTMFLLVVLTTTVVS). Residues 22-45 (FNLDRESNHENRRTSNQITRGMWD) constitute a propeptide that is removed on maturation. 2 disulfide bridges follow: Cys-47-Cys-53 and Cys-48-Cys-61. Positions 49-51 (DDP) are lacks the Ser-Xaa-Pro motif that is crucial for potent interaction with nAChR.

The protein belongs to the conotoxin A superfamily. In terms of tissue distribution, expressed by the venom duct.

The protein localises to the secreted. Its function is as follows. Alpha-conotoxins act on postsynaptic membranes, they bind to the nicotinic acetylcholine receptors (nAChR) and thus inhibit them. Has possibly a distinct nAChR binding mode from other alpha-conotoxins, due to a different three residue motif (lacks the Ser-Xaa-Pro motif). The chain is Alpha-conotoxin-like Lt1.3 from Conus litteratus (Lettered cone).